The chain runs to 499 residues: Glycerol kinase (499 aa).

Thr-13 is a binding site for ADP. Residues Thr-13, Thr-14, and Ser-15 each contribute to the ATP site. Thr-13 serves as a coordination point for sn-glycerol 3-phosphate. Residue Arg-17 coordinates ADP. Sn-glycerol 3-phosphate contacts are provided by Arg-83, Glu-84, Tyr-135, and Asp-244. Arg-83, Glu-84, Tyr-135, Asp-244, and Gln-245 together coordinate glycerol. Thr-266 and Gly-309 together coordinate ADP. Thr-266, Gly-309, Gln-313, and Gly-410 together coordinate ATP. ADP contacts are provided by Gly-410 and Asn-414.

It belongs to the FGGY kinase family. Homotetramer and homodimer (in equilibrium).

The catalysed reaction is glycerol + ATP = sn-glycerol 3-phosphate + ADP + H(+). It participates in polyol metabolism; glycerol degradation via glycerol kinase pathway; sn-glycerol 3-phosphate from glycerol: step 1/1. Activated by phosphorylation and inhibited by fructose 1,6-bisphosphate (FBP). In terms of biological role, key enzyme in the regulation of glycerol uptake and metabolism. Catalyzes the phosphorylation of glycerol to yield sn-glycerol 3-phosphate. The protein is Glycerol kinase of Brevibacillus brevis (strain 47 / JCM 6285 / NBRC 100599).